Here is a 1403-residue protein sequence, read N- to C-terminus: Centrosomal protein of 162 kDa (1403 aa).

The tract at residues 20 to 46 (LSDDSFENSNKTPRQPNEDNKEMKKKD) is disordered. A compositionally biased stretch (basic and acidic residues) spans 35 to 46 (PNEDNKEMKKKD). Phosphoserine occurs at positions 160 and 163. Disordered stretches follow at residues 169–243 (LHRY…MLAN), 256–292 (VGLS…SSGD), 306–348 (SLGD…ESDL), and 453–606 (NPSL…GGNR). The segment covering 178 to 208 (PAEDGCENESEQEELPETYSDDFEDAEDADD) has biased composition (acidic residues). Over residues 210–238 (LITKDEETHPKENSESGKDSFPKQEEEKT) the composition is skewed to basic and acidic residues. Residues 485–500 (PCKKARSTPSLPKRKP) show a composition bias toward basic residues. 2 stretches are compositionally biased toward basic and acidic residues: residues 526-536 (LEKKTSKDNTK) and 571-585 (PHRE…RPED). Residues 614 to 1124 (KRAQDAEEKW…QKERRMMLSR (511 aa)) are a coiled coil. The disordered stretch occupies residues 1126–1147 (IPRSREETAAKRLKKDPNRGHG). Over residues 1128–1144 (RSREETAAKRLKKDPNR) the composition is skewed to basic and acidic residues. A coiled-coil region spans residues 1174–1386 (EENYRLRSEL…LDVLRELHRQ (213 aa)).

The protein belongs to the CEP162 family. Interacts with CPNE4. Interacts with alpha-tubulin. Interacts with CEP290.

The protein resides in the cytoplasm. The protein localises to the cytoskeleton. Its subcellular location is the microtubule organizing center. It localises to the centrosome. It is found in the centriole. The protein resides in the spindle. The protein localises to the nucleus. In terms of biological role, required to promote assembly of the transition zone in primary cilia. Acts by specifically recognizing and binding the axonemal microtubule. Localizes to the distal ends of centrioles before ciliogenesis and directly binds to axonemal microtubule, thereby promoting and restricting transition zone formation specifically at the cilia base. Required to mediate CEP290 association with microtubules. The protein is Centrosomal protein of 162 kDa (Cep162) of Mus musculus (Mouse).